Here is a 316-residue protein sequence, read N- to C-terminus: Transaldolase (316 aa).

Residue Lys-131 is the Schiff-base intermediate with substrate of the active site.

This sequence belongs to the transaldolase family. Type 1 subfamily. As to quaternary structure, homodimer.

The protein localises to the cytoplasm. The catalysed reaction is D-sedoheptulose 7-phosphate + D-glyceraldehyde 3-phosphate = D-erythrose 4-phosphate + beta-D-fructose 6-phosphate. Its pathway is carbohydrate degradation; pentose phosphate pathway; D-glyceraldehyde 3-phosphate and beta-D-fructose 6-phosphate from D-ribose 5-phosphate and D-xylulose 5-phosphate (non-oxidative stage): step 2/3. Functionally, transaldolase is important for the balance of metabolites in the pentose-phosphate pathway. In Sodalis glossinidius (strain morsitans), this protein is Transaldolase.